The chain runs to 147 residues: Deoxyuridine 5'-triphosphate nucleotidohydrolase (147 aa).

8 residues coordinate dUMP: Ser-69, Gly-82, Asp-85, Tyr-88, Lys-93, Arg-137, Phe-142, and Gly-143.

This sequence belongs to the dUTPase family. As to quaternary structure, homotrimer. Mg(2+) serves as cofactor.

It carries out the reaction dUTP + H2O = dUMP + diphosphate + H(+). It participates in pyrimidine metabolism; dUMP biosynthesis; dUMP from dCTP (dUTP route): step 2/2. Involved in nucleotide metabolism via production of dUMP, the immediate precursor of thymidine nucleotides, and decreases the intracellular concentration of dUTP so that uracil cannot be incorporated into DNA. Shows a significant activity against dITP, another potentially mutagenic nucleotide. This is Deoxyuridine 5'-triphosphate nucleotidohydrolase from Saccharomyces cerevisiae (strain ATCC 204508 / S288c) (Baker's yeast).